We begin with the raw amino-acid sequence, 130 residues long: Flagellar assembly factor FliW (130 aa).

Belongs to the FliW family. Interacts with translational regulator CsrA and flagellin(s).

The protein localises to the cytoplasm. Its function is as follows. Acts as an anti-CsrA protein, binds CsrA and prevents it from repressing translation of its target genes, one of which is flagellin. Binds to flagellin and participates in the assembly of the flagellum. This Clostridioides difficile (strain 630) (Peptoclostridium difficile) protein is Flagellar assembly factor FliW.